Reading from the N-terminus, the 128-residue chain is Large ribosomal subunit protein uL18 (128 aa).

This sequence belongs to the universal ribosomal protein uL18 family. As to quaternary structure, part of the 50S ribosomal subunit; part of the 5S rRNA/L5/L18/L25 subcomplex. Contacts the 5S and 23S rRNAs.

This is one of the proteins that bind and probably mediate the attachment of the 5S RNA into the large ribosomal subunit, where it forms part of the central protuberance. This Acidothermus cellulolyticus (strain ATCC 43068 / DSM 8971 / 11B) protein is Large ribosomal subunit protein uL18.